Consider the following 308-residue polypeptide: Paired box protein 3 homolog (308 aa).

A DNA-binding region (paired) is located at residues 13–140 (GQGRVNQLGG…PAIKRLIGNK (128 aa)). The interval 16 to 72 (RVNQLGGVFINGRPLPIHVRHAIISMAKKGIKPCHISRQLKVSHGAVSKILNRYAET) is PAI subdomain. The interval 92 to 140 (AVEKEILIACDENPQMSAAELRDWLIHKDICTKGNAPTVPAIKRLIGNK) is RED subdomain. A disordered region spans residues 168 to 191 (CSKSSSDDEEGSSPSNDASSRRNR). The segment at residues 187–246 (SRRNRTSFTAEQLDVLENAFRADTYPHANARESISKETGLSEEKIMTWFSNRRARCRKNM) is a DNA-binding region (homeobox).

The protein belongs to the paired homeobox family.

It is found in the nucleus. Transcriptional activator. Regulates the lateral/ventral epidermal cell fate decision. The protein is Paired box protein 3 homolog of Caenorhabditis elegans.